The sequence spans 188 residues: MSRLRIFADTNPATPEFDSRDGDAIAAELVKIGVTFERWHASAPVEPGATPEQVMDAYRADIDRISAERGFKTVDVVSIAPDNPKREEMRAKFLDEHFHKEDEVRFFVAGSGLFTLHVDAKVYEIECVKDDLIAVPDGTLHWFDMGPEPHFVAIRFFTEPDGWVGHFTGTEIAKQFPRYAPKKPHKAS.

Residues His-97, His-99, Glu-103, and His-141 each coordinate Fe(2+). Ni(2+)-binding residues include His-97, His-99, Glu-103, and His-141.

This sequence belongs to the acireductone dioxygenase (ARD) family. Monomer. Requires Fe(2+) as cofactor. The cofactor is Ni(2+).

It catalyses the reaction 1,2-dihydroxy-5-(methylsulfanyl)pent-1-en-3-one + O2 = 3-(methylsulfanyl)propanoate + CO + formate + 2 H(+). The enzyme catalyses 1,2-dihydroxy-5-(methylsulfanyl)pent-1-en-3-one + O2 = 4-methylsulfanyl-2-oxobutanoate + formate + 2 H(+). The protein operates within amino-acid biosynthesis; L-methionine biosynthesis via salvage pathway; L-methionine from S-methyl-5-thio-alpha-D-ribose 1-phosphate: step 5/6. Its function is as follows. Catalyzes 2 different reactions between oxygen and the acireductone 1,2-dihydroxy-3-keto-5-methylthiopentene (DHK-MTPene) depending upon the metal bound in the active site. Fe-containing acireductone dioxygenase (Fe-ARD) produces formate and 2-keto-4-methylthiobutyrate (KMTB), the alpha-ketoacid precursor of methionine in the methionine recycle pathway. Ni-containing acireductone dioxygenase (Ni-ARD) produces methylthiopropionate, carbon monoxide and formate, and does not lie on the methionine recycle pathway. The chain is Acireductone dioxygenase from Xanthomonas axonopodis pv. citri (strain 306).